A 333-amino-acid polypeptide reads, in one-letter code: Glyceraldehyde-3-phosphate dehydrogenase (333 aa).

NAD(+)-binding positions include 12-13 (RI), Asp36, Arg80, and Ser120. D-glyceraldehyde 3-phosphate-binding positions include 150–152 (SCT), Thr181, Arg196, 209–210 (TG), and Arg232. Catalysis depends on Cys151, which acts as the Nucleophile. Asn314 contacts NAD(+).

This sequence belongs to the glyceraldehyde-3-phosphate dehydrogenase family. In terms of assembly, homotetramer.

Its subcellular location is the cytoplasm. It carries out the reaction D-glyceraldehyde 3-phosphate + phosphate + NAD(+) = (2R)-3-phospho-glyceroyl phosphate + NADH + H(+). The protein operates within carbohydrate degradation; glycolysis; pyruvate from D-glyceraldehyde 3-phosphate: step 1/5. Its function is as follows. Catalyzes the oxidative phosphorylation of glyceraldehyde 3-phosphate (G3P) to 1,3-bisphosphoglycerate (BPG) using the cofactor NAD. The first reaction step involves the formation of a hemiacetal intermediate between G3P and a cysteine residue, and this hemiacetal intermediate is then oxidized to a thioester, with concomitant reduction of NAD to NADH. The reduced NADH is then exchanged with the second NAD, and the thioester is attacked by a nucleophilic inorganic phosphate to produce BPG. The polypeptide is Glyceraldehyde-3-phosphate dehydrogenase (gapB) (Cereibacter sphaeroides (Rhodobacter sphaeroides)).